A 596-amino-acid polypeptide reads, in one-letter code: Beta-fructofuranosidase, insoluble isoenzyme 7 (596 aa).

An N-terminal signal peptide occupies residues 1-24 (MARLGLAVCAASFHLFLLLASTSS). Substrate is bound by residues 51 to 54 (WQND), glutamine 70, and tryptophan 78. Aspartate 54 is an active-site residue. Asparagine 82 is a glycosylation site (N-linked (GlcNAc...) asparagine). Substrate contacts are provided by residues 115-116 (WS), 179-180 (RD), and glutamate 234. An N-linked (GlcNAc...) asparagine glycan is attached at asparagine 330. Cysteine 432 and cysteine 478 are disulfide-bonded. The N-linked (GlcNAc...) asparagine glycan is linked to asparagine 552.

The protein belongs to the glycosyl hydrolase 32 family.

Its subcellular location is the secreted. It localises to the extracellular space. It is found in the apoplast. The protein resides in the cell wall. The enzyme catalyses Hydrolysis of terminal non-reducing beta-D-fructofuranoside residues in beta-D-fructofuranosides.. Its function is as follows. May play a role in sucrose partitioning during seed development. The polypeptide is Beta-fructofuranosidase, insoluble isoenzyme 7 (CIN7) (Oryza sativa subsp. indica (Rice)).